Consider the following 161-residue polypeptide: SsrA-binding protein (161 aa).

The segment at D138–R161 is disordered. The span at K139–R154 shows a compositional bias: basic and acidic residues.

The protein belongs to the SmpB family.

It localises to the cytoplasm. Required for rescue of stalled ribosomes mediated by trans-translation. Binds to transfer-messenger RNA (tmRNA), required for stable association of tmRNA with ribosomes. tmRNA and SmpB together mimic tRNA shape, replacing the anticodon stem-loop with SmpB. tmRNA is encoded by the ssrA gene; the 2 termini fold to resemble tRNA(Ala) and it encodes a 'tag peptide', a short internal open reading frame. During trans-translation Ala-aminoacylated tmRNA acts like a tRNA, entering the A-site of stalled ribosomes, displacing the stalled mRNA. The ribosome then switches to translate the ORF on the tmRNA; the nascent peptide is terminated with the 'tag peptide' encoded by the tmRNA and targeted for degradation. The ribosome is freed to recommence translation, which seems to be the essential function of trans-translation. The protein is SsrA-binding protein of Aliivibrio fischeri (strain ATCC 700601 / ES114) (Vibrio fischeri).